Reading from the N-terminus, the 457-residue chain is Zinc finger protein ZPR1 (457 aa).

Positions Met1–Pro13 are enriched in polar residues. The interval Met1–Pro21 is disordered. 2 consecutive C4-type zinc fingers follow at residues Cys43–Cys75 and Cys261–Cys293. The interval Val414–Ala457 is disordered. Composition is skewed to basic and acidic residues over residues Asp425–Glu438 and Met448–Ala457.

It belongs to the ZPR1 family.

Might mediate EGFR and FGFR signal transduction cascades required for lumen formation in tracheal cells. This Drosophila melanogaster (Fruit fly) protein is Zinc finger protein ZPR1.